The following is a 373-amino-acid chain: Glutamate 5-kinase (373 aa).

Lys15 contacts ATP. Substrate contacts are provided by Ser55, Asp142, and Asn154. Residues 174–175 (TD) and 216–222 (TGGMATK) each bind ATP. The 79-residue stretch at 281 to 359 (AGRIIVDDGA…SRIEAILGYR (79 aa)) folds into the PUA domain.

This sequence belongs to the glutamate 5-kinase family.

It localises to the cytoplasm. It carries out the reaction L-glutamate + ATP = L-glutamyl 5-phosphate + ADP. The protein operates within amino-acid biosynthesis; L-proline biosynthesis; L-glutamate 5-semialdehyde from L-glutamate: step 1/2. Its function is as follows. Catalyzes the transfer of a phosphate group to glutamate to form L-glutamate 5-phosphate. This Pelobacter propionicus (strain DSM 2379 / NBRC 103807 / OttBd1) protein is Glutamate 5-kinase.